We begin with the raw amino-acid sequence, 1053 residues long: Protein CLEC16A (1053 aa).

Positions 51–198 constitute an FPL domain; it reads IRSITEILIW…AVRTITLNVY (148 aa). Disordered regions lie at residues 375–434, 452–471, and 892–983; these read SLEM…GESE, STSV…AATC, and SSPS…SPSL. Residues 381 to 392 show a composition bias toward basic residues; it reads HKGKRRVQKRPN. Positions 892 to 938 are enriched in low complexity; that stretch reads SSPSLSSQSPPSASGSPSGSGSTSHCDSGGTSSSSTPSTAQSPADAP.

It belongs to the CLEC16A/gop-1 family. In terms of assembly, interacts with RNF41/NRDP1. In terms of tissue distribution, almost exclusively expressed in immune cells, including dendritic cells, B-lymphocytes and natural killer cells.

Its subcellular location is the endosome membrane. It localises to the lysosome membrane. Functionally, regulator of mitophagy through the upstream regulation of the RNF41/NRDP1-PRKN pathway. Mitophagy is a selective form of autophagy necessary for mitochondrial quality control. The RNF41/NRDP1-PRKN pathway regulates autophagosome-lysosome fusion during late mitophagy. May protect RNF41/NRDP1 from proteasomal degradation, RNF41/NRDP1 which regulates proteasomal degradation of PRKN. Plays a key role in beta cells functions by regulating mitophagy/autophagy and mitochondrial health. This is Protein CLEC16A from Homo sapiens (Human).